Here is a 335-residue protein sequence, read N- to C-terminus: MQPSPPPTELVPSERAVVLLSCALSALGSGLLVATHALWPDLRSRARRLLLFLSLADLLSAASYFYGVLQNFAGPSWDCVLQGALSTFANTSSFFWTVAIALYLYLSIVRAARGPRTDRLLWAFHVVSWGVPLVITVAAVALKKIGYDASDVSVGWCWIDLEAKDHVLWMLLTGKLWEMLAYVLLPLLYLLVRKHINRAHTALSEYRPILSQEHRLLRHSSMADKKLVLIPLIFIGLRVWSTVRFVLTLCGSPAVQTPVLVVLHGIGNTFQGGANCIMFVLCTRAVRTRLFSLCCCCCSSQPPTKSPAGTPKAPAPSKPGESQESQGTPGELPST.

At 1-15 (MQPSPPPTELVPSER) the chain is on the extracellular side. Residues 16–36 (AVVLLSCALSALGSGLLVATH) form a helical membrane-spanning segment. Over 37–48 (ALWPDLRSRARR) the chain is Cytoplasmic. A helical transmembrane segment spans residues 49-69 (LLLFLSLADLLSAASYFYGVL). At 70–87 (QNFAGPSWDCVLQGALST) the chain is on the extracellular side. A helical membrane pass occupies residues 88–108 (FANTSSFFWTVAIALYLYLSI). The Cytoplasmic portion of the chain corresponds to 109 to 119 (VRAARGPRTDR). Residues 120 to 140 (LLWAFHVVSWGVPLVITVAAV) form a helical membrane-spanning segment. Residues 141-166 (ALKKIGYDASDVSVGWCWIDLEAKDH) lie on the Extracellular side of the membrane. A helical transmembrane segment spans residues 167–187 (VLWMLLTGKLWEMLAYVLLPL). Residues 188-226 (LYLLVRKHINRAHTALSEYRPILSQEHRLLRHSSMADKK) lie on the Cytoplasmic side of the membrane. Residues 227–247 (LVLIPLIFIGLRVWSTVRFVL) traverse the membrane as a helical segment. Topologically, residues 248 to 258 (TLCGSPAVQTP) are extracellular. The chain crosses the membrane as a helical span at residues 259–279 (VLVVLHGIGNTFQGGANCIMF). Over 280-335 (VLCTRAVRTRLFSLCCCCCSSQPPTKSPAGTPKAPAPSKPGESQESQGTPGELPST) the chain is Cytoplasmic. The tract at residues 300–335 (SQPPTKSPAGTPKAPAPSKPGESQESQGTPGELPST) is disordered. Over residues 320 to 335 (GESQESQGTPGELPST) the composition is skewed to polar residues.

The protein belongs to the G-protein coupled receptor 2 family.

It is found in the cell projection. It localises to the cilium membrane. Its function is as follows. Orphan receptor that promotes neuronal differentiation of radial glial progenitors (RGPs). The activity of this receptor is mediated by a G(q)-protein that activates a phosphatidylinositol-calcium second messenger. This chain is G-protein coupled receptor 157 (GPR157), found in Homo sapiens (Human).